Reading from the N-terminus, the 885-residue chain is Alanine--tRNA ligase (885 aa).

Residues histidine 564, histidine 568, cysteine 676, and histidine 680 each contribute to the Zn(2+) site.

This sequence belongs to the class-II aminoacyl-tRNA synthetase family. Requires Zn(2+) as cofactor.

It localises to the cytoplasm. The enzyme catalyses tRNA(Ala) + L-alanine + ATP = L-alanyl-tRNA(Ala) + AMP + diphosphate. Functionally, catalyzes the attachment of alanine to tRNA(Ala) in a two-step reaction: alanine is first activated by ATP to form Ala-AMP and then transferred to the acceptor end of tRNA(Ala). Also edits incorrectly charged Ser-tRNA(Ala) and Gly-tRNA(Ala) via its editing domain. The sequence is that of Alanine--tRNA ligase from Brucella anthropi (strain ATCC 49188 / DSM 6882 / CCUG 24695 / JCM 21032 / LMG 3331 / NBRC 15819 / NCTC 12168 / Alc 37) (Ochrobactrum anthropi).